The sequence spans 673 residues: DNA topoisomerase 1 (673 aa).

A Toprim domain is found at 1–134 (MVAEKPKAAA…ARRMKFSTLA (134 aa)). Mg(2+)-binding residues include Glu-4 and Asp-103. In terms of domain architecture, Topo IA-type catalytic spans 149-568 (DVEMIEAGMA…MSKKTISKLL (420 aa)). Positions 189-194 (SAGRVQ) are interaction with DNA. The O-(5'-phospho-DNA)-tyrosine intermediate role is filled by Tyr-311. Residues 352–374 (LRPVQGSKDDPAHPAIHPTGEKP) form a disordered region. The segment at 595 to 615 (CHLCGRKAVSAVSGYRLCSHH) adopts a C4-type zinc-finger fold.

The protein belongs to the type IA topoisomerase family. Monomer. The cofactor is Mg(2+).

The catalysed reaction is ATP-independent breakage of single-stranded DNA, followed by passage and rejoining.. In terms of biological role, releases the supercoiling and torsional tension of DNA, which is introduced during the DNA replication and transcription, by transiently cleaving and rejoining one strand of the DNA duplex. Introduces a single-strand break via transesterification at a target site in duplex DNA. The scissile phosphodiester is attacked by the catalytic tyrosine of the enzyme, resulting in the formation of a DNA-(5'-phosphotyrosyl)-enzyme intermediate and the expulsion of a 3'-OH DNA strand. The free DNA strand then undergoes passage around the unbroken strand, thus removing DNA supercoils. Finally, in the religation step, the DNA 3'-OH attacks the covalent intermediate to expel the active-site tyrosine and restore the DNA phosphodiester backbone. This is DNA topoisomerase 1 from Aeropyrum pernix (strain ATCC 700893 / DSM 11879 / JCM 9820 / NBRC 100138 / K1).